The chain runs to 226 residues: Cytidylate kinase (226 aa).

Residue 10–18 coordinates ATP; sequence GPASSGKST.

This sequence belongs to the cytidylate kinase family. Type 1 subfamily.

It is found in the cytoplasm. It carries out the reaction CMP + ATP = CDP + ADP. The enzyme catalyses dCMP + ATP = dCDP + ADP. The sequence is that of Cytidylate kinase from Streptococcus pyogenes serotype M5 (strain Manfredo).